Here is a 195-residue protein sequence, read N- to C-terminus: ATP-dependent Clp protease proteolytic subunit (195 aa).

Catalysis depends on Ser98, which acts as the Nucleophile. The active site involves His123.

The protein belongs to the peptidase S14 family. Fourteen ClpP subunits assemble into 2 heptameric rings which stack back to back to give a disk-like structure with a central cavity, resembling the structure of eukaryotic proteasomes.

Its subcellular location is the cytoplasm. It carries out the reaction Hydrolysis of proteins to small peptides in the presence of ATP and magnesium. alpha-casein is the usual test substrate. In the absence of ATP, only oligopeptides shorter than five residues are hydrolyzed (such as succinyl-Leu-Tyr-|-NHMec, and Leu-Tyr-Leu-|-Tyr-Trp, in which cleavage of the -Tyr-|-Leu- and -Tyr-|-Trp bonds also occurs).. Cleaves peptides in various proteins in a process that requires ATP hydrolysis. Has a chymotrypsin-like activity. Plays a major role in the degradation of misfolded proteins. In Thermodesulfovibrio yellowstonii (strain ATCC 51303 / DSM 11347 / YP87), this protein is ATP-dependent Clp protease proteolytic subunit.